The primary structure comprises 285 residues: 3-methyl-2-oxobutanoate hydroxymethyltransferase (285 aa).

Residues 1–23 (MSEHNVYGAAQPAQPAQPAQPRT) form a disordered region. Low complexity predominate over residues 9–21 (AAQPAQPAQPAQP). Mg(2+) contacts are provided by Asp66 and Asp105. 3-methyl-2-oxobutanoate contacts are provided by residues 66-67 (DS), Asp105, and Lys135. Glu137 serves as a coordination point for Mg(2+). The active-site Proton acceptor is the Glu203.

This sequence belongs to the PanB family. Homodecamer; pentamer of dimers. Mg(2+) is required as a cofactor.

The protein localises to the cytoplasm. It catalyses the reaction 3-methyl-2-oxobutanoate + (6R)-5,10-methylene-5,6,7,8-tetrahydrofolate + H2O = 2-dehydropantoate + (6S)-5,6,7,8-tetrahydrofolate. It participates in cofactor biosynthesis; (R)-pantothenate biosynthesis; (R)-pantoate from 3-methyl-2-oxobutanoate: step 1/2. Functionally, catalyzes the reversible reaction in which hydroxymethyl group from 5,10-methylenetetrahydrofolate is transferred onto alpha-ketoisovalerate to form ketopantoate. The chain is 3-methyl-2-oxobutanoate hydroxymethyltransferase from Mycobacterium avium (strain 104).